The sequence spans 197 residues: MEPIQVHKGKAVVLDRVNIDTDQIIPKQFLKRVERTGFGQYLFYDWRFQADGADNPAFELNQPEANGASILITGHNFGCGSSREHAPWALYDYGFRVIIAPSFADIFYNNCVKNGLLPIRLSPEETELWMERAKESQEEITVDLGEQLIKQNGLETKFEMDSYWKQMLYNGWDEISLTLQYEEAIAKYEHRQSAVNK.

Belongs to the LeuD family. LeuD type 1 subfamily. In terms of assembly, heterodimer of LeuC and LeuD.

The enzyme catalyses (2R,3S)-3-isopropylmalate = (2S)-2-isopropylmalate. The protein operates within amino-acid biosynthesis; L-leucine biosynthesis; L-leucine from 3-methyl-2-oxobutanoate: step 2/4. Functionally, catalyzes the isomerization between 2-isopropylmalate and 3-isopropylmalate, via the formation of 2-isopropylmaleate. The protein is 3-isopropylmalate dehydratase small subunit of Shouchella clausii (strain KSM-K16) (Alkalihalobacillus clausii).